An 808-amino-acid polypeptide reads, in one-letter code: Glutamate receptor 1.1 (808 aa).

An N-terminal signal peptide occupies residues 1–19 (MEILFSISILALLFSGVVA). Residues 20 to 541 (APSDDDVFEE…MWTFFDPFEK (522 aa)) lie on the Extracellular side of the membrane. N-linked (GlcNAc...) asparagine glycans are attached at residues Asn-288, Asn-339, and Asn-504. A helical transmembrane segment spans residues 542–562 (SLWLASGAFFVLTGIVVWLVE). Topologically, residues 563-570 (RSVNPEFQ) are cytoplasmic. The helical transmembrane segment at 571 to 591 (GSWGQQLSMMLWFGFSTIVFA) threads the bilayer. Topologically, residues 592–602 (HREKLQKMSSR) are cytoplasmic. Residues 603-623 (FLVIVWVFVVLILTSSYSANL) traverse the membrane as a helical segment. Residues 624 to 771 (TSTKTISRMQ…SKRFTFRELR (148 aa)) are Extracellular-facing. Residues 772-792 (GLFIIAGAAHVLVLALHLFHT) traverse the membrane as a helical segment. Topologically, residues 793–808 (RQEVSRLCTKLQSFYK) are cytoplasmic.

The protein belongs to the glutamate-gated ion channel (TC 1.A.10.1) family. May form heteromers. Expressed predominantly in roots. First detected in the root-shoot junction, and later in lateral roots and at the margin of matures leaves.

It localises to the membrane. Glutamate-gated receptor that probably acts as a non-selective cation channel. Can transport sodium, potassium, and calcium ions. Functions as a carbon and nitrogen regulator and/or sensor that regulates carbon and nitrogen metabolism and distinct physiological process such as germination through the control of acid abscisic (ABA) biosynthesis. May be involved in light-signal transduction and calcium homeostasis via the regulation of calcium influx into cells. Seems required for the regulation of the abscisic acid (ABA) signaling pathway that modulates many aspects of plant physiology such as seed germination and response to drought (e.g. stomata opening). This is Glutamate receptor 1.1 (GLR1.1) from Arabidopsis thaliana (Mouse-ear cress).